The primary structure comprises 590 residues: V-type ATP synthase alpha chain (590 aa).

Position 231–238 (231–238 (GPFGSGKT)) interacts with ATP.

This sequence belongs to the ATPase alpha/beta chains family.

It catalyses the reaction ATP + H2O + 4 H(+)(in) = ADP + phosphate + 5 H(+)(out). Produces ATP from ADP in the presence of a proton gradient across the membrane. The V-type alpha chain is a catalytic subunit. This Clostridium botulinum (strain ATCC 19397 / Type A) protein is V-type ATP synthase alpha chain.